Reading from the N-terminus, the 265-residue chain is Hydroxyethylthiazole kinase (265 aa).

Position 50 (Met50) interacts with substrate. ATP-binding residues include Arg125 and Thr171. Gly198 contributes to the substrate binding site.

The protein belongs to the Thz kinase family. It depends on Mg(2+) as a cofactor.

The enzyme catalyses 5-(2-hydroxyethyl)-4-methylthiazole + ATP = 4-methyl-5-(2-phosphooxyethyl)-thiazole + ADP + H(+). The protein operates within cofactor biosynthesis; thiamine diphosphate biosynthesis; 4-methyl-5-(2-phosphoethyl)-thiazole from 5-(2-hydroxyethyl)-4-methylthiazole: step 1/1. Its function is as follows. Catalyzes the phosphorylation of the hydroxyl group of 4-methyl-5-beta-hydroxyethylthiazole (THZ). The sequence is that of Hydroxyethylthiazole kinase from Salmonella agona (strain SL483).